The chain runs to 890 residues: Translation initiation factor IF-2 (890 aa).

The segment at 45–302 (LIDHLNQKNS…SSLQQGFQKP (258 aa)) is disordered. Over residues 67 to 81 (STLNIPSTGGKSKSV) the composition is skewed to polar residues. Residues 92-217 (VKRDPQEAER…RMAEENKWTD (126 aa)) show a composition bias toward basic and acidic residues. Residues 252–266 (GRGRNAKAARPKKGN) show a composition bias toward basic residues. Positions 267–280 (KHAESKADREEARA) are enriched in basic and acidic residues. The 170-residue stretch at 389-558 (PRAPVVTIMG…LLQAEVLELK (170 aa)) folds into the tr-type G domain. The G1 stretch occupies residues 398–405 (GHVDHGKT). 398 to 405 (GHVDHGKT) serves as a coordination point for GTP. Positions 423-427 (GITQH) are G2. Residues 444 to 447 (DTPG) are G3. GTP is bound by residues 444–448 (DTPGH) and 498–501 (NKID). The tract at residues 498–501 (NKID) is G4. Positions 534-536 (SAK) are G5. Position 808 is an N6-acetyllysine (Lys-808).

Belongs to the TRAFAC class translation factor GTPase superfamily. Classic translation factor GTPase family. IF-2 subfamily.

Its subcellular location is the cytoplasm. Its function is as follows. One of the essential components for the initiation of protein synthesis. Protects formylmethionyl-tRNA from spontaneous hydrolysis and promotes its binding to the 30S ribosomal subunits. Also involved in the hydrolysis of GTP during the formation of the 70S ribosomal complex. This is Translation initiation factor IF-2 from Shigella dysenteriae serotype 1 (strain Sd197).